The chain runs to 493 residues: Cytoplasmic tRNA 2-thiolation protein 2 (493 aa).

Ser-489 bears the Phosphoserine mark.

Belongs to the CTU2/NCS2 family. Interacts with NCS6 and URM1. May act by forming a heterodimer with NCS6.

The protein resides in the cytoplasm. The protein operates within tRNA modification; 5-methoxycarbonylmethyl-2-thiouridine-tRNA biosynthesis. Its function is as follows. Plays a central role in 2-thiolation of mcm(5)S(2)U at tRNA wobble positions of tRNA(Lys), tRNA(Glu) and tRNA(Gln). May act by forming a heterodimer with NCS6 that ligates sulfur from thiocarboxylated URM1 onto the uridine of tRNAs at wobble position. Prior mcm(5) tRNA modification by the elongator complex is required for 2-thiolation. May also be involved in protein urmylation. The chain is Cytoplasmic tRNA 2-thiolation protein 2 from Saccharomyces cerevisiae (strain AWRI1631) (Baker's yeast).